A 388-amino-acid chain; its full sequence is Fetuin-B (388 aa).

A signal peptide spans 1-18 (MGLLRLLVLCTLAACCMA). 2 Cystatin fetuin-B-type domains span residues 28–141 (QRPL…YNCT) and 152–264 (TTCP…VTCE). N-linked (GlcNAc...) asparagine glycosylation is present at N40. Disulfide bonds link C96-C107, C120-C140, C154-C157, C217-C224, and C237-C263. A glycan (N-linked (GlcNAc...) asparagine) is linked at N139. 2 disordered regions span residues 270 to 343 (AQVP…PQGD) and 367 to 388 (KEQRSAECPGPEKENNPLVLPP). Over residues 279–300 (AVTQGPQKLPQKNTAPTSSPSV) the composition is skewed to polar residues. 2 O-linked (GalNAc...) threonine glycosylation sites follow: T292 and T295. Position 321 is a phosphoserine (S321). Residues 367 to 381 (KEQRSAECPGPEKEN) show a composition bias toward basic and acidic residues.

Belongs to the fetuin family. Liver, lung and tongue.

The protein resides in the secreted. Protease inhibitor required for egg fertilization. Required to prevent premature zona pellucida hardening before fertilization, probably by inhibiting the protease activity of ASTL, a protease that mediates the cleavage of ZP2 and triggers zona pellucida hardening. The chain is Fetuin-B (Fetub) from Mus musculus (Mouse).